Here is a 331-residue protein sequence, read N- to C-terminus: Putative mitochondrial 2-oxoglutarate/malate carrier protein (331 aa).

Solcar repeat units follow at residues 39–128, 140–231, and 239–329; these read VRAA…FMSR, VGFK…AKAQ, and SSKV…LGWL. 6 consecutive transmembrane segments (helical) span residues 42-62, 103-121, 148-168, 199-219, 245-265, and 309-329; these read ALPFINGGLSGMVATTVIQPI, GLSAGLLRQAVYTTARIGC, AGLAAGGLAAMIGNPADLALI, GVAALWAGAAPTVVRAMALNF, LSASAIAGFFASFFSLPFDFV, and YVRIAPHAMVTLLVADYLGWL.

The protein belongs to the mitochondrial carrier (TC 2.A.29) family.

Its subcellular location is the mitochondrion inner membrane. Its function is as follows. Catalyzes the transport of 2-oxoglutarate across the inner mitochondrial membrane. This Neurospora crassa (strain ATCC 24698 / 74-OR23-1A / CBS 708.71 / DSM 1257 / FGSC 987) protein is Putative mitochondrial 2-oxoglutarate/malate carrier protein (mic-33).